A 99-amino-acid chain; its full sequence is Aspartyl/glutamyl-tRNA(Asn/Gln) amidotransferase subunit C (99 aa).

The protein belongs to the GatC family. In terms of assembly, heterotrimer of A, B and C subunits.

It catalyses the reaction L-glutamyl-tRNA(Gln) + L-glutamine + ATP + H2O = L-glutaminyl-tRNA(Gln) + L-glutamate + ADP + phosphate + H(+). The catalysed reaction is L-aspartyl-tRNA(Asn) + L-glutamine + ATP + H2O = L-asparaginyl-tRNA(Asn) + L-glutamate + ADP + phosphate + 2 H(+). Allows the formation of correctly charged Asn-tRNA(Asn) or Gln-tRNA(Gln) through the transamidation of misacylated Asp-tRNA(Asn) or Glu-tRNA(Gln) in organisms which lack either or both of asparaginyl-tRNA or glutaminyl-tRNA synthetases. The reaction takes place in the presence of glutamine and ATP through an activated phospho-Asp-tRNA(Asn) or phospho-Glu-tRNA(Gln). In Corynebacterium diphtheriae (strain ATCC 700971 / NCTC 13129 / Biotype gravis), this protein is Aspartyl/glutamyl-tRNA(Asn/Gln) amidotransferase subunit C.